Reading from the N-terminus, the 808-residue chain is Ribosome biogenesis protein BOP1 homolog (808 aa).

Composition is skewed to low complexity over residues 1 to 25 (MTSPKGKPSPKRSAPAPATAALTPC) and 33 to 50 (ATSSASASASSHISSSFD). The segment at 1–55 (MTSPKGKPSPKRSAPAPATAALTPCAEERTEGATSSASASASSHISSSFDSPRDD) is disordered. 5 WD repeats span residues 430–469 (GHTATVRSVSVSPNGQYLATGCDDHLVRVFEVQTGRLMKR), 640–680 (KFSE…RRFK), 682–720 (SGGVTTCLSIHPEGDNFLVGDTTSHTSWFDMDFSDKPYK), 724–766 (SHKG…DYNK), and 777–808 (KHQRPVYAVAWHPTLAWLFTSTEDGVVTAWTE).

This sequence belongs to the WD repeat BOP1/ERB1 family.

The protein resides in the nucleus. It is found in the nucleolus. Its subcellular location is the nucleoplasm. Functionally, required for maturation of ribosomal RNAs and formation of the large ribosomal subunit. The sequence is that of Ribosome biogenesis protein BOP1 homolog from Leishmania major.